Here is a 317-residue protein sequence, read N- to C-terminus: Putative 12-oxophytodienoate reductase 10 (317 aa).

26 to 28 (PVG) contacts FMN. 117–120 (HGAN) contributes to the substrate binding site. Y122 (proton donor) is an active-site residue. R169 contacts FMN. Residue R209 coordinates substrate. Residues G244 and 265-266 (GR) each bind FMN.

The protein belongs to the NADH:flavin oxidoreductase/NADH oxidase family. Requires FMN as cofactor.

Putative oxophytodienoate reductase that may be involved in the biosynthesis or metabolism of oxylipin signaling molecules. The protein is Putative 12-oxophytodienoate reductase 10 (OPR10) of Oryza sativa subsp. japonica (Rice).